Reading from the N-terminus, the 366-residue chain is Anhydro-N-acetylmuramic acid kinase (366 aa).

G12 to D19 is an ATP binding site.

Belongs to the anhydro-N-acetylmuramic acid kinase family.

It carries out the reaction 1,6-anhydro-N-acetyl-beta-muramate + ATP + H2O = N-acetyl-D-muramate 6-phosphate + ADP + H(+). It participates in amino-sugar metabolism; 1,6-anhydro-N-acetylmuramate degradation. Its pathway is cell wall biogenesis; peptidoglycan recycling. In terms of biological role, catalyzes the specific phosphorylation of 1,6-anhydro-N-acetylmuramic acid (anhMurNAc) with the simultaneous cleavage of the 1,6-anhydro ring, generating MurNAc-6-P. Is required for the utilization of anhMurNAc either imported from the medium or derived from its own cell wall murein, and thus plays a role in cell wall recycling. This Nitrosospira multiformis (strain ATCC 25196 / NCIMB 11849 / C 71) protein is Anhydro-N-acetylmuramic acid kinase.